The primary structure comprises 60 residues: Mastoparan-VT3 (60 aa).

Positions 1-27 are cleaved as a signal peptide; the sequence is MKNTILILFTAFIALLGFFGMSAEALA. 4 AXPX repeats span residues 27–30, 31–34, 35–38, and 41–44; these read ADPK, ADPL, AGPN, and ADPE. Residues 28 to 45 constitute a propeptide that is removed on maturation; that stretch reads DPKADPLAGPNPDADPEA. Leu59 is modified (leucine amide).

This sequence belongs to the MCD family. Mastoparan subfamily. Expressed by the venom gland.

It localises to the secreted. Functionally, the synthetic peptide shows antimicrobial activities against Gram-negative bacteria (but not against all strains tested), Gram-positive bacteria (all strains tested) and the fungi C.albicans and C.parapsilosis. Exhibits moderate hemolytic activity (25% at 100 ug/ml) against washed human erythrocytes. This is Mastoparan-VT3 from Vespa tropica (Greater banded hornet).